We begin with the raw amino-acid sequence, 341 residues long: L-threonine 3-dehydrogenase (341 aa).

Residue C38 coordinates Zn(2+). Active-site charge relay system residues include T40 and H43. H63, E64, C93, C96, C99, and C107 together coordinate Zn(2+). Residues I175, D195, R200, 262 to 264 (LGI), and 286 to 287 (IY) each bind NAD(+).

The protein belongs to the zinc-containing alcohol dehydrogenase family. In terms of assembly, homotetramer. It depends on Zn(2+) as a cofactor.

The protein resides in the cytoplasm. It carries out the reaction L-threonine + NAD(+) = (2S)-2-amino-3-oxobutanoate + NADH + H(+). The protein operates within amino-acid degradation; L-threonine degradation via oxydo-reductase pathway; glycine from L-threonine: step 1/2. Its function is as follows. Catalyzes the NAD(+)-dependent oxidation of L-threonine to 2-amino-3-ketobutyrate. The chain is L-threonine 3-dehydrogenase from Proteus mirabilis (strain HI4320).